A 431-amino-acid chain; its full sequence is Ornithine aminotransferase, mitochondrial (431 aa).

Lys286 carries the post-translational modification N6-(pyridoxal phosphate)lysine.

This sequence belongs to the class-III pyridoxal-phosphate-dependent aminotransferase family. In terms of assembly, homotetramer. It depends on pyridoxal 5'-phosphate as a cofactor.

It localises to the mitochondrion matrix. It carries out the reaction a 2-oxocarboxylate + L-ornithine = L-glutamate 5-semialdehyde + an L-alpha-amino acid. Its pathway is amino-acid biosynthesis; L-proline biosynthesis; L-glutamate 5-semialdehyde from L-ornithine: step 1/1. This chain is Ornithine aminotransferase, mitochondrial (Oat), found in Drosophila melanogaster (Fruit fly).